We begin with the raw amino-acid sequence, 123 residues long: Large ribosomal subunit protein bL12 (123 aa).

It belongs to the bacterial ribosomal protein bL12 family. Homodimer. Part of the ribosomal stalk of the 50S ribosomal subunit. Forms a multimeric L10(L12)X complex, where L10 forms an elongated spine to which 2 to 4 L12 dimers bind in a sequential fashion. Binds GTP-bound translation factors.

In terms of biological role, forms part of the ribosomal stalk which helps the ribosome interact with GTP-bound translation factors. Is thus essential for accurate translation. This is Large ribosomal subunit protein bL12 from Bartonella tribocorum (strain CIP 105476 / IBS 506).